The following is a 123-amino-acid chain: UPF0102 protein PSPPH_4120 (123 aa).

It belongs to the UPF0102 family.

This Pseudomonas savastanoi pv. phaseolicola (strain 1448A / Race 6) (Pseudomonas syringae pv. phaseolicola (strain 1448A / Race 6)) protein is UPF0102 protein PSPPH_4120.